The sequence spans 185 residues: Elongation factor P (185 aa).

This sequence belongs to the elongation factor P family.

The protein localises to the cytoplasm. Its pathway is protein biosynthesis; polypeptide chain elongation. In terms of biological role, involved in peptide bond synthesis. Stimulates efficient translation and peptide-bond synthesis on native or reconstituted 70S ribosomes in vitro. Probably functions indirectly by altering the affinity of the ribosome for aminoacyl-tRNA, thus increasing their reactivity as acceptors for peptidyl transferase. The polypeptide is Elongation factor P (Bacillus mycoides (strain KBAB4) (Bacillus weihenstephanensis)).